A 263-amino-acid polypeptide reads, in one-letter code: tRNA (guanine-N(7)-)-methyltransferase (263 aa).

Residues 1 to 10 (MLPQDPSTEP) show a composition bias toward polar residues. Residues 1 to 38 (MLPQDPSTEPTPADDAAPVDSAGQASAPSPADPEGVAH) are disordered. S-adenosyl-L-methionine is bound by residues Glu91, Glu116, Asp143, and Asp166. Asp166 is an active-site residue. Residue Lys170 coordinates substrate. The tract at residues 172 to 177 (RHNKRR) is interaction with RNA. Substrate contacts are provided by residues Asp202 and 240 to 243 (TKFE).

It belongs to the class I-like SAM-binding methyltransferase superfamily. TrmB family.

It catalyses the reaction guanosine(46) in tRNA + S-adenosyl-L-methionine = N(7)-methylguanosine(46) in tRNA + S-adenosyl-L-homocysteine. It functions in the pathway tRNA modification; N(7)-methylguanine-tRNA biosynthesis. Functionally, catalyzes the formation of N(7)-methylguanine at position 46 (m7G46) in tRNA. This chain is tRNA (guanine-N(7)-)-methyltransferase, found in Cupriavidus necator (strain ATCC 17699 / DSM 428 / KCTC 22496 / NCIMB 10442 / H16 / Stanier 337) (Ralstonia eutropha).